Consider the following 52-residue polypeptide: Transcriptional regulator SlrA (52 aa).

In terms of domain architecture, Sin spans 1–38 (MKTHVKKDLDKGWHMLIQEARSIGLGIHDVRQFLESET).

Component of the SlrR/SlrA complex.

In terms of biological role, required specifically for induction of eps and yqxM operons by antagonizing SinR. Regulates SlrR activity. Controls the initiation of biofilm formation. The sequence is that of Transcriptional regulator SlrA (slrA) from Bacillus subtilis (strain 168).